A 676-amino-acid polypeptide reads, in one-letter code: UvrABC system protein B (676 aa).

The region spanning 26–414 (EGLDAGLAHQ…SAGEIADQVV (389 aa)) is the Helicase ATP-binding domain. 39-46 (GVTGSGKT) contributes to the ATP binding site. The Beta-hairpin motif lies at 92–115 (YYDYYQPEAYVPTTDTFIEKDSSV). Residues 432–598 (QVDDLLSEIR…ALKRNIKDIM (167 aa)) enclose the Helicase C-terminal domain. Residues 636–671 (EKEITKLEAQMYKHAQDLEFELAAQKRDEIEKLRQQ) form the UVR domain.

This sequence belongs to the UvrB family. Forms a heterotetramer with UvrA during the search for lesions. Interacts with UvrC in an incision complex.

The protein localises to the cytoplasm. Functionally, the UvrABC repair system catalyzes the recognition and processing of DNA lesions. A damage recognition complex composed of 2 UvrA and 2 UvrB subunits scans DNA for abnormalities. Upon binding of the UvrA(2)B(2) complex to a putative damaged site, the DNA wraps around one UvrB monomer. DNA wrap is dependent on ATP binding by UvrB and probably causes local melting of the DNA helix, facilitating insertion of UvrB beta-hairpin between the DNA strands. Then UvrB probes one DNA strand for the presence of a lesion. If a lesion is found the UvrA subunits dissociate and the UvrB-DNA preincision complex is formed. This complex is subsequently bound by UvrC and the second UvrB is released. If no lesion is found, the DNA wraps around the other UvrB subunit that will check the other stand for damage. The chain is UvrABC system protein B from Vibrio vulnificus (strain CMCP6).